Reading from the N-terminus, the 342-residue chain is Mitochondrial fission factor (342 aa).

At 1–322 the chain is on the cytoplasmic side; it reads MSKGTSSDTS…ENKERAKREM (322 aa). Thr-115 bears the Phosphothreonine mark. Ala-146 is subject to Phosphoserine. Position 149 is a phosphothreonine (Arg-149). 4 positions are modified to phosphoserine: Lys-151, Ser-155, Ser-157, and Ser-172. At Thr-200 the chain carries Phosphothreonine. Phosphoserine occurs at positions 202, 229, 233, and 295. Positions 291-322 form a coiled coil; that stretch reads VDAASLRRQIIKLNRRLQLLEEENKERAKREM. Residues 323-340 form a helical; Anchor for type IV membrane protein membrane-spanning segment; sequence VMYSITVAFWLLNSWLWF. At 341 to 342 the chain is on the mitochondrial intermembrane side; the sequence is RR.

The protein belongs to the Tango11 family. In terms of assembly, homodimer. Interacts with DNM1L. Interacts with C11orf65/MFI; the interaction inhibits MFF interaction with DNM1L. As to expression, highly expressed in heart, kidney, liver, brain, muscle, and stomach.

The protein resides in the mitochondrion outer membrane. It is found in the peroxisome. Its subcellular location is the cytoplasmic vesicle. It localises to the secretory vesicle. The protein localises to the synaptic vesicle. Functionally, plays a role in mitochondrial and peroxisomal fission. Promotes the recruitment and association of the fission mediator dynamin-related protein 1 (DNM1L) to the mitochondrial surface. May be involved in regulation of synaptic vesicle membrane dynamics by recruitment of DNM1L to clathrin-containing vesicles. The polypeptide is Mitochondrial fission factor (MFF) (Homo sapiens (Human)).